We begin with the raw amino-acid sequence, 468 residues long: MTERAGLRLHDTAAGAVRDFVPLREGHVSIYLCGATVQGLPHIGHVRSGVAFDILRRWLMARGFDVAFIRNVTDIDDKILNKAAAAERPWWEWAATYERAFTAAYDALDVLPPSAEPRATGHVTQMVELIERLIERGHAYAGGGDVYFDVLSYPDYGQLSGHKVDDVHQGEGVATGKRDQRDFTLWKGAKPGEPSWPTPWGRGRPGWHLECSAMARTYLGAQFDIHCGGMDLIFPHHENEIAQSRAAGDGFARYWLHNGWVTMGGEKMSKSLGNVLAIPTMLQRVRPAELRYYLGSAHYRSMLEFSDIALQDAVNAYVGVEEFLHRVRSRAGVVVVGDWTPRFAAALDDDLSVPIALAEIHHTRAEGNRALDAGDHDAALQSASSIRAMMGILGCDPLDERWESRDETSAALAAVDVLVQAELENRQKAREERNWALADEIRNRLKNAGIEVTDTADGPQWLLGGDGK.

Position 33 (C33) interacts with Zn(2+). Positions 35–45 (ATVQGLPHIGH) match the 'HIGH' region motif. Residues C211, H236, and E240 each coordinate Zn(2+). The short motif at 267 to 271 (KMSKS) is the 'KMSKS' region element. K270 serves as a coordination point for ATP.

Belongs to the class-I aminoacyl-tRNA synthetase family. Monomer. The cofactor is Zn(2+).

It is found in the cytoplasm. The enzyme catalyses tRNA(Cys) + L-cysteine + ATP = L-cysteinyl-tRNA(Cys) + AMP + diphosphate. The sequence is that of Cysteine--tRNA ligase from Mycobacterium marinum (strain ATCC BAA-535 / M).